Reading from the N-terminus, the 179-residue chain is Peptide deformylase (179 aa).

Residues cysteine 102 and histidine 144 each coordinate Fe cation. Glutamate 145 is a catalytic residue. Histidine 148 contributes to the Fe cation binding site.

Belongs to the polypeptide deformylase family. It depends on Fe(2+) as a cofactor.

The catalysed reaction is N-terminal N-formyl-L-methionyl-[peptide] + H2O = N-terminal L-methionyl-[peptide] + formate. Its function is as follows. Removes the formyl group from the N-terminal Met of newly synthesized proteins. Requires at least a dipeptide for an efficient rate of reaction. N-terminal L-methionine is a prerequisite for activity but the enzyme has broad specificity at other positions. The chain is Peptide deformylase from Wolbachia pipientis subsp. Culex pipiens (strain wPip).